The chain runs to 466 residues: Heat stress transcription factor A-5 (466 aa).

The DNA-binding element occupies 21 to 115 (PAPFLVKTYE…LLKNIHRRKP (95 aa)). The segment at 125–191 (SSTDQERAVL…KLLNFLETAI (67 aa)) is hydrophobic repeat HR-A/B. The Bipartite nuclear localization signal motif lies at 198–217 (KNFGKKVEQLDISAYNKKRR). 3 disordered regions span residues 215-248 (KRRL…GNIF), 272-300 (HSIQ…LTKR), and 422-466 (TERP…QLTL). Positions 218 to 233 (LPEVEQSKPPSEDSHL) are enriched in basic and acidic residues. The short motif at 414 to 423 (DVFWEQFLTE) is the AHA element. Polar residues-rich tracts occupy residues 425–438 (PGSS…STYR) and 455–466 (LRNTKNIEQLTL). A Nuclear export signal motif is present at residues 461–466 (IEQLTL).

This sequence belongs to the HSF family. Class A subfamily. As to quaternary structure, homotrimer. Post-translationally, exhibits temperature-dependent phosphorylation.

It localises to the cytoplasm. The protein resides in the nucleus. Functionally, transcriptional activator that specifically binds DNA sequence 5'-AGAAnnTTCT-3' known as heat shock promoter elements (HSE). The protein is Heat stress transcription factor A-5 (HSFA5) of Arabidopsis thaliana (Mouse-ear cress).